The chain runs to 37 residues: Cytochrome b6-f complex subunit 5 (37 aa).

The helical transmembrane segment at 5-25 (LLCGIVLGLIPITLAGLFMAA) threads the bilayer.

The protein belongs to the PetG family. As to quaternary structure, the 4 large subunits of the cytochrome b6-f complex are cytochrome b6, subunit IV (17 kDa polypeptide, PetD), cytochrome f and the Rieske protein, while the 4 small subunits are PetG, PetL, PetM and PetN. The complex functions as a dimer.

Its subcellular location is the cellular thylakoid membrane. Functionally, component of the cytochrome b6-f complex, which mediates electron transfer between photosystem II (PSII) and photosystem I (PSI), cyclic electron flow around PSI, and state transitions. PetG is required for either the stability or assembly of the cytochrome b6-f complex. This chain is Cytochrome b6-f complex subunit 5, found in Synechococcus elongatus (strain ATCC 33912 / PCC 7942 / FACHB-805) (Anacystis nidulans R2).